Consider the following 134-residue polypeptide: Bet1-like protein At1g29060 (134 aa).

Gly residues predominate over residues 1-12; it reads MASNRGAGGSLY. Residues 1–31 are disordered; that stretch reads MASNRGAGGSLYGGADPYRSREGLSTRNASG. Over 1-110 the chain is Cytoplasmic; sequence MASNRGAGGS…LSIIRSGNNH (110 aa). Positions 40–102 constitute a t-SNARE coiled-coil homology domain; sequence DPMHSDLDDE…KNNIRKLNLS (63 aa). Residues 111-131 form a helical; Anchor for type IV membrane protein membrane-spanning segment; sequence IMHVVLFALLLFFILYMWSKM. Residues 132–134 lie on the Vesicular side of the membrane; sequence FKR.

This sequence belongs to the BET1 family.

Its subcellular location is the golgi apparatus membrane. The protein localises to the endoplasmic reticulum membrane. In terms of biological role, required for vesicular transport from the ER to the Golgi complex. Functions as a SNARE associated with ER-derived vesicles. The sequence is that of Bet1-like protein At1g29060 from Arabidopsis thaliana (Mouse-ear cress).